The following is a 289-amino-acid chain: Nucleotide-binding protein FRAAL4592 (289 aa).

Residue 13-20 (GLSGAGRS) coordinates ATP. 64–67 (DVRG) is a GTP binding site.

It belongs to the RapZ-like family.

In terms of biological role, displays ATPase and GTPase activities. The chain is Nucleotide-binding protein FRAAL4592 from Frankia alni (strain DSM 45986 / CECT 9034 / ACN14a).